An 80-amino-acid polypeptide reads, in one-letter code: Conotoxin SmIVB (80 aa).

The signal sequence occupies residues 1-21 (MGMRMMFTVFLLVVLATTVVS). Residues 22-38 (IPSDRASDGRNAEVNER) constitute a propeptide that is removed on maturation. Proline 40 carries the post-translational modification 4-hydroxyproline. An O-linked (HexNAc...) serine glycan is attached at serine 45. 4-hydroxyproline occurs at positions 55, 60, 61, 70, and 72. Serine 75 carries the post-translational modification Serine amide. Positions 76–80 (GRRNH) are excised as a propeptide.

The protein belongs to the conotoxin A superfamily. In terms of processing, contains 3 disulfide bonds. In terms of tissue distribution, expressed by the venom duct.

It localises to the secreted. Neurotoxin with probable activity on sodium channel. Induces intense repetitive firing of the frog neuromuscular junction, leading to a tetanic contracture in muscle fiber (spastic paralysis). In vivo, shows the same effect as the whole venom when injected on fish prey. The sequence is that of Conotoxin SmIVB from Conus stercusmuscarum (Fly-specked cone).